A 195-amino-acid chain; its full sequence is Protein Fer3 (195 aa).

Disordered stretches follow at residues 1–24 (MQHPHPIDQPTYMPDVPFQPLWGQ) and 56–82 (PLVPQRPSTNGRANGSSSSSKKTRRRV). Residues 63 to 75 (STNGRANGSSSSS) show a composition bias toward low complexity. Residues 86–138 (AQRRAANIRERRRMFNLNEAFDKLRRKVPTFAYEKRLSRIETLRLAITYIGFM) enclose the bHLH domain. The segment at 145-175 (TPSNSHKSRSDVYGSMNGHHQAPPPAIHPHH) is disordered.

The protein localises to the nucleus. Functionally, transcription factor that binds to the E-box and functions as inhibitor of transcription. DNA binding requires dimerization with an E protein. Inhibits transcription activation by ASCL1/MASH1 by sequestering E proteins. In Drosophila melanogaster (Fruit fly), this protein is Protein Fer3 (fer3).